A 283-amino-acid chain; its full sequence is Shikimate dehydrogenase (NADP(+)) (283 aa).

Shikimate contacts are provided by residues 18–20 (SYS) and Thr66. Catalysis depends on Lys70, which acts as the Proton acceptor. Positions 91 and 106 each coordinate shikimate. NADP(+) contacts are provided by residues 130–134 (GAGGA) and Met225. Tyr227 is a binding site for shikimate. Residue Gly248 coordinates NADP(+).

The protein belongs to the shikimate dehydrogenase family. Homodimer.

The enzyme catalyses shikimate + NADP(+) = 3-dehydroshikimate + NADPH + H(+). It participates in metabolic intermediate biosynthesis; chorismate biosynthesis; chorismate from D-erythrose 4-phosphate and phosphoenolpyruvate: step 4/7. Its function is as follows. Involved in the biosynthesis of the chorismate, which leads to the biosynthesis of aromatic amino acids. Catalyzes the reversible NADPH linked reduction of 3-dehydroshikimate (DHSA) to yield shikimate (SA). This Pelodictyon phaeoclathratiforme (strain DSM 5477 / BU-1) protein is Shikimate dehydrogenase (NADP(+)).